Reading from the N-terminus, the 330-residue chain is 4-hydroxythreonine-4-phosphate dehydrogenase (330 aa).

Substrate-binding residues include histidine 136 and threonine 137. A divalent metal cation contacts are provided by histidine 166, histidine 211, and histidine 266. The substrate site is built by lysine 274, asparagine 283, and arginine 292.

Belongs to the PdxA family. Homodimer. The cofactor is Zn(2+). Mg(2+) is required as a cofactor. Co(2+) serves as cofactor.

Its subcellular location is the cytoplasm. The catalysed reaction is 4-(phosphooxy)-L-threonine + NAD(+) = 3-amino-2-oxopropyl phosphate + CO2 + NADH. The protein operates within cofactor biosynthesis; pyridoxine 5'-phosphate biosynthesis; pyridoxine 5'-phosphate from D-erythrose 4-phosphate: step 4/5. Its function is as follows. Catalyzes the NAD(P)-dependent oxidation of 4-(phosphooxy)-L-threonine (HTP) into 2-amino-3-oxo-4-(phosphooxy)butyric acid which spontaneously decarboxylates to form 3-amino-2-oxopropyl phosphate (AHAP). The chain is 4-hydroxythreonine-4-phosphate dehydrogenase from Sodalis glossinidius (strain morsitans).